A 121-amino-acid chain; its full sequence is Putative iron-sulfur cluster insertion protein ErpA (121 aa).

Residues Cys49, Cys113, and Cys115 each contribute to the iron-sulfur cluster site.

Belongs to the HesB/IscA family. Homodimer. The cofactor is iron-sulfur cluster.

In terms of biological role, required for insertion of 4Fe-4S clusters. In Paraburkholderia phymatum (strain DSM 17167 / CIP 108236 / LMG 21445 / STM815) (Burkholderia phymatum), this protein is Putative iron-sulfur cluster insertion protein ErpA.